We begin with the raw amino-acid sequence, 604 residues long: Beta-alanine transporter (604 aa).

The Cytoplasmic segment spans residues 1–23 (MDFDEVLREVGSFGLYQKVIICS). Residues 24 to 44 (VLLPAALPCAFHAYSQLFIAA) traverse the membrane as a helical segment. Topologically, residues 45-151 (TPQHFCRVPE…QEWNLVCDRS (107 aa)) are extracellular. 2 N-linked (GlcNAc...) asparagine glycosylation sites follow: N68 and N88. The helical transmembrane segment at 152–172 (FLVTLALVVFGVGGLLGNYVF) threads the bilayer. Residues 173–182 (GYLVDLWGRR) lie on the Cytoplasmic side of the membrane. Residues 183-203 (PSFYAYLLLEIIACAASAFAW) form a helical membrane-spanning segment. Over 204-212 (NYYTWLGLR) the chain is Extracellular. A helical transmembrane segment spans residues 213–233 (FVVGLTVPAILASPYVLAIEL). Over 234 to 243 (VGPERRVFCT) the chain is Cytoplasmic. The chain crosses the membrane as a helical span at residues 244-264 (IVSNIAYSLGLVVLAGVIYIV). The Extracellular segment spans residues 265–268 (RDWR). The chain crosses the membrane as a helical span at residues 269–289 (ELSLAVSMPLLMLFSCFFVLP). The Cytoplasmic portion of the chain corresponds to 290–362 (ESPRWLMAVG…FRGPNMRRKT (73 aa)). A helical membrane pass occupies residues 363-383 (LIITLIWFANTSVYVGLSYYA). Topologically, residues 384-390 (PALGGDE) are extracellular. Residues 391-411 (IWNFFLAGAVELPTYLLLWPG) form a helical membrane-spanning segment. Over 412–418 (LSYFGRR) the chain is Cytoplasmic. Residues 419-439 (WILFISMLVGGVACVATFLYP) traverse the membrane as a helical segment. Residues 440–442 (DIT) are Extracellular-facing. A helical transmembrane segment spans residues 443–463 (LLLYCVGKMGISSSFVVLPLM). Over 464 to 473 (ASELYPTVVR) the chain is Cytoplasmic. A helical transmembrane segment spans residues 474-494 (GLGMSFSSVISMVGPIVIPMI). At 495-501 (NHMGQQM) the chain is on the extracellular side. Residues 502–522 (LVLPLIVMGALLILGGFASLL) form a helical membrane-spanning segment. At 523-604 (LPETRNRNLP…SICKNEMRTL (82 aa)) the chain is on the cytoplasmic side.

The protein belongs to the major facilitator (TC 2.A.1) superfamily. Organic cation transporter (TC 2.A.1.19) family. Expressed in the head and predominantly in the retinal pigment cells of the compound eye.

It localises to the cell membrane. In terms of biological role, beta-alanine transporter required for the uptake of beta-alanine by the glia. Required for the recycling process of the neurotransmitter histamine in photoreceptor neurons of the compound eye and therefore for photoreceptor synaptic transmission. Following histamine release from photoreceptors and its uptake by glia, histamine is conjugated to beta-alanine by e/Ebony to form the inactive metabolite, carcinine. The protein is Beta-alanine transporter of Drosophila melanogaster (Fruit fly).